The primary structure comprises 120 residues: Large ribosomal subunit protein uL18 (120 aa).

This sequence belongs to the universal ribosomal protein uL18 family. In terms of assembly, part of the 50S ribosomal subunit; part of the 5S rRNA/L5/L18/L25 subcomplex. Contacts the 5S and 23S rRNAs.

Its function is as follows. This is one of the proteins that bind and probably mediate the attachment of the 5S RNA into the large ribosomal subunit, where it forms part of the central protuberance. The protein is Large ribosomal subunit protein uL18 of Bacillus cereus (strain G9842).